Consider the following 351-residue polypeptide: UDP-N-acetylglucosamine--N-acetylmuramyl-(pentapeptide) pyrophosphoryl-undecaprenol N-acetylglucosamine transferase (351 aa).

UDP-N-acetyl-alpha-D-glucosamine is bound by residues 11–13 (TGG), Asn120, Arg161, Ser187, and Gln281.

Belongs to the glycosyltransferase 28 family. MurG subfamily.

The protein localises to the cell inner membrane. It catalyses the reaction di-trans,octa-cis-undecaprenyl diphospho-N-acetyl-alpha-D-muramoyl-L-alanyl-D-glutamyl-meso-2,6-diaminopimeloyl-D-alanyl-D-alanine + UDP-N-acetyl-alpha-D-glucosamine = di-trans,octa-cis-undecaprenyl diphospho-[N-acetyl-alpha-D-glucosaminyl-(1-&gt;4)]-N-acetyl-alpha-D-muramoyl-L-alanyl-D-glutamyl-meso-2,6-diaminopimeloyl-D-alanyl-D-alanine + UDP + H(+). Its pathway is cell wall biogenesis; peptidoglycan biosynthesis. Its function is as follows. Cell wall formation. Catalyzes the transfer of a GlcNAc subunit on undecaprenyl-pyrophosphoryl-MurNAc-pentapeptide (lipid intermediate I) to form undecaprenyl-pyrophosphoryl-MurNAc-(pentapeptide)GlcNAc (lipid intermediate II). The chain is UDP-N-acetylglucosamine--N-acetylmuramyl-(pentapeptide) pyrophosphoryl-undecaprenol N-acetylglucosamine transferase from Rippkaea orientalis (strain PCC 8801 / RF-1) (Cyanothece sp. (strain PCC 8801)).